The following is a 496-amino-acid chain: Squalene epoxidase ERG1 (496 aa).

The Cytoplasmic segment spans residues 1–16; sequence MSAVNVAPELINADNT. Residues 17–37 traverse the membrane as a helical segment; that stretch reads ITYDAIVIGAGVIGPCVATGL. FAD contacts are provided by residues 28 to 29, 48 to 49, Arg56, and Arg158; these read VI and ER. The Lumenal segment spans residues 38 to 474; sequence ARKGKKVLIV…FLGLPMALLE (437 aa). Glycyl lysine isopeptide (Lys-Gly) (interchain with G-Cter in ubiquitin) cross-links involve residues Lys284, Lys289, and Lys311. FAD-binding residues include Asp335 and Met348. A helical transmembrane segment spans residues 475–495; that stretch reads GIMILITAIRVFTPFLFGELI. A topological domain (cytoplasmic) is located at residue Gly496.

It belongs to the squalene monooxygenase family. As to quaternary structure, interacts with ERG28. It depends on FAD as a cofactor.

It is found in the microsome membrane. Its subcellular location is the endoplasmic reticulum membrane. The protein localises to the lipid droplet. The enzyme catalyses squalene + reduced [NADPH--hemoprotein reductase] + O2 = (S)-2,3-epoxysqualene + oxidized [NADPH--hemoprotein reductase] + H2O + H(+). It participates in terpene metabolism; lanosterol biosynthesis; lanosterol from farnesyl diphosphate: step 2/3. With respect to regulation, inhibited by the allylamine antimycotic drugs. Squalene epoxidase; part of the third module of ergosterol biosynthesis pathway that includes the late steps of the pathway. ERG1 catalyzes the epoxidation of squalene into 2,3-epoxysqualene. The third module or late pathway involves the ergosterol synthesis itself through consecutive reactions that mainly occur in the endoplasmic reticulum (ER) membrane. Firstly, the squalene synthase ERG9 catalyzes the condensation of 2 farnesyl pyrophosphate moieties to form squalene, which is the precursor of all steroids. Squalene synthase is crucial for balancing the incorporation of farnesyl diphosphate (FPP) into sterol and nonsterol isoprene synthesis. Secondly, the squalene epoxidase ERG1 catalyzes the stereospecific oxidation of squalene to (S)-2,3-epoxysqualene, which is considered to be a rate-limiting enzyme in steroid biosynthesis. Then, the lanosterol synthase ERG7 catalyzes the cyclization of (S)-2,3 oxidosqualene to lanosterol, a reaction that forms the sterol core. In the next steps, lanosterol is transformed to zymosterol through a complex process involving various demethylation, reduction and desaturation reactions. The lanosterol 14-alpha-demethylase ERG11 (also known as CYP51) catalyzes C14-demethylation of lanosterol to produce 4,4'-dimethyl cholesta-8,14,24-triene-3-beta-ol, which is critical for ergosterol biosynthesis. The C-14 reductase ERG24 reduces the C14=C15 double bond of 4,4-dimethyl-cholesta-8,14,24-trienol to produce 4,4-dimethyl-cholesta-8,24-dienol. 4,4-dimethyl-cholesta-8,24-dienol is substrate of the C-4 demethylation complex ERG25-ERG26-ERG27 in which ERG25 catalyzes the three-step monooxygenation required for the demethylation of 4,4-dimethyl and 4alpha-methylsterols, ERG26 catalyzes the oxidative decarboxylation that results in a reduction of the 3-beta-hydroxy group at the C-3 carbon to an oxo group, and ERG27 is responsible for the reduction of the keto group on the C-3. ERG28 has a role as a scaffold to help anchor ERG25, ERG26 and ERG27 to the endoplasmic reticulum and ERG29 regulates the activity of the iron-containing C4-methylsterol oxidase ERG25. Then, the sterol 24-C-methyltransferase ERG6 catalyzes the methyl transfer from S-adenosyl-methionine to the C-24 of zymosterol to form fecosterol. The C-8 sterol isomerase ERG2 catalyzes the reaction which results in unsaturation at C-7 in the B ring of sterols and thus converts fecosterol to episterol. The sterol-C5-desaturase ERG3 then catalyzes the introduction of a C-5 double bond in the B ring to produce 5-dehydroepisterol. The C-22 sterol desaturase ERG5 further converts 5-dehydroepisterol into ergosta-5,7,22,24(28)-tetraen-3beta-ol by forming the C-22(23) double bond in the sterol side chain. Finally, ergosta-5,7,22,24(28)-tetraen-3beta-ol is substrate of the C-24(28) sterol reductase ERG4 to produce ergosterol. This is Squalene epoxidase ERG1 from Saccharomyces cerevisiae (strain ATCC 204508 / S288c) (Baker's yeast).